We begin with the raw amino-acid sequence, 664 residues long: Putative membrane protein Bcell_0381 (664 aa).

The segment covering Asp-588 to Asn-616 has biased composition (acidic residues). The interval Asp-588 to Ile-622 is disordered. A helical transmembrane segment spans residues Tyr-636 to Tyr-656.

It localises to the cell membrane. The sequence is that of Putative membrane protein Bcell_0381 from Evansella cellulosilytica (strain ATCC 21833 / DSM 2522 / FERM P-1141 / JCM 9156 / N-4) (Bacillus cellulosilyticus).